Here is a 207-residue protein sequence, read N- to C-terminus: Proteasome subunit beta (207 aa).

Residues 1 to 9 constitute a propeptide, removed in mature form; by autocatalysis; it reads MSNKNTFEG. Residue threonine 10 is the Nucleophile of the active site.

Belongs to the peptidase T1B family. In terms of assembly, the 20S proteasome core is composed of 14 alpha and 14 beta subunits that assemble into four stacked heptameric rings, resulting in a barrel-shaped structure. The two inner rings, each composed of seven catalytic beta subunits, are sandwiched by two outer rings, each composed of seven alpha subunits. The catalytic chamber with the active sites is on the inside of the barrel. Has a gated structure, the ends of the cylinder being occluded by the N-termini of the alpha-subunits. Is capped at one or both ends by the proteasome regulatory ATPase, PAN.

Its subcellular location is the cytoplasm. It carries out the reaction Cleavage of peptide bonds with very broad specificity.. The formation of the proteasomal ATPase PAN-20S proteasome complex, via the docking of the C-termini of PAN into the intersubunit pockets in the alpha-rings, triggers opening of the gate for substrate entry. Interconversion between the open-gate and close-gate conformations leads to a dynamic regulation of the 20S proteasome proteolysis activity. In terms of biological role, component of the proteasome core, a large protease complex with broad specificity involved in protein degradation. The chain is Proteasome subunit beta from Methanobrevibacter ruminantium (strain ATCC 35063 / DSM 1093 / JCM 13430 / OCM 146 / M1) (Methanobacterium ruminantium).